The chain runs to 256 residues: Trans-aconitate 2-methyltransferase (256 aa).

It belongs to the methyltransferase superfamily. Tam family.

It localises to the cytoplasm. It catalyses the reaction trans-aconitate + S-adenosyl-L-methionine = (E)-3-(methoxycarbonyl)pent-2-enedioate + S-adenosyl-L-homocysteine. Catalyzes the S-adenosylmethionine monomethyl esterification of trans-aconitate. In Rhodopseudomonas palustris (strain BisA53), this protein is Trans-aconitate 2-methyltransferase.